The following is a 105-amino-acid chain: Met repressor (105 aa).

It belongs to the MetJ family. Homodimer.

It localises to the cytoplasm. This regulatory protein, when combined with SAM (S-adenosylmethionine) represses the expression of the methionine regulon and of enzymes involved in SAM synthesis. The protein is Met repressor of Hamiltonella defensa subsp. Acyrthosiphon pisum (strain 5AT).